A 126-amino-acid chain; its full sequence is Histone H2B 1.1 (126 aa).

Positions 1–12 are enriched in low complexity; it reads MPEPAKSAPAPK. Positions 1–35 are disordered; sequence MPEPAKSAPAPKKGSKKAVTKTQKKDGKKRRKSRK. An N6-acetyllysine mark is found at lysine 6 and lysine 13. Serine 15 carries the phosphoserine modification. N6-acetyllysine occurs at positions 16 and 21. Serine 113 is a glycosylation site (O-linked (GlcNAc) serine). Lysine 121 participates in a covalent cross-link: Glycyl lysine isopeptide (Lys-Gly) (interchain with G-Cter in ubiquitin).

The protein belongs to the histone H2B family. In terms of assembly, the nucleosome is a histone octamer containing two molecules each of H2A, H2B, H3 and H4 assembled in one H3-H4 heterotetramer and two H2A-H2B heterodimers. The octamer wraps approximately 147 bp of DNA. Monoubiquitination of Lys-121 by BRE1 gives a specific tag for epigenetic transcriptional activation and is also prerequisite for histone H3 'Lys-4' and 'Lys-79' methylation. Post-translationally, phosphorylated on Ser-15 during developmentally programmed apoptosis; which may facilitate apoptotic chromatin condensation. In terms of processing, glcNAcylation at Ser-113 promotes monoubiquitination of Lys-121. It fluctuates in response to extracellular glucose, and associates with transcribed genes.

It localises to the nucleus. The protein localises to the chromosome. Core component of nucleosome. Nucleosomes wrap and compact DNA into chromatin, limiting DNA accessibility to the cellular machineries which require DNA as a template. Histones thereby play a central role in transcription regulation, DNA repair, DNA replication and chromosomal stability. DNA accessibility is regulated via a complex set of post-translational modifications of histones, also called histone code, and nucleosome remodeling. The polypeptide is Histone H2B 1.1 (Xenopus laevis (African clawed frog)).